The primary structure comprises 148 residues: IQ domain-containing protein F5 (148 aa).

IQ domains lie at 11–40 and 67–96; these read ERSAAVFIQAWWRGMLVRRTLLHAALRAWI and QEWAAVRLQSWVRMWCVRQRYCRLLNAVRI.

This chain is IQ domain-containing protein F5 (IQCF5), found in Homo sapiens (Human).